A 307-amino-acid polypeptide reads, in one-letter code: UDP-3-O-acyl-N-acetylglucosamine deacetylase (307 aa).

Zn(2+) is bound by residues His-80, His-239, and Asp-243. Residue His-266 is the Proton donor of the active site.

The protein belongs to the LpxC family. Requires Zn(2+) as cofactor.

The enzyme catalyses a UDP-3-O-[(3R)-3-hydroxyacyl]-N-acetyl-alpha-D-glucosamine + H2O = a UDP-3-O-[(3R)-3-hydroxyacyl]-alpha-D-glucosamine + acetate. The protein operates within glycolipid biosynthesis; lipid IV(A) biosynthesis; lipid IV(A) from (3R)-3-hydroxytetradecanoyl-[acyl-carrier-protein] and UDP-N-acetyl-alpha-D-glucosamine: step 2/6. In terms of biological role, catalyzes the hydrolysis of UDP-3-O-myristoyl-N-acetylglucosamine to form UDP-3-O-myristoylglucosamine and acetate, the committed step in lipid A biosynthesis. In Neisseria gonorrhoeae (strain ATCC 700825 / FA 1090), this protein is UDP-3-O-acyl-N-acetylglucosamine deacetylase.